Consider the following 36-residue polypeptide: Serum amyloid P-component (36 aa).

Residues 6-36 (SGKVFVIPMATSTSHVKLHARVSEPISAMTM) enclose the Pentraxin (PTX) domain.

It belongs to the pentraxin family. In terms of assembly, homopentamer. Discoid arrangement of 5 covalently bound subunits. Ca(2+) is required as a cofactor.

The protein resides in the secreted. This Salmo salar (Atlantic salmon) protein is Serum amyloid P-component.